Reading from the N-terminus, the 446-residue chain is 5-hydroxytryptamine receptor 7 (446 aa).

Over 1-84 (MMGVNSSGRP…INYGRAEKVV (84 aa)) the chain is Extracellular. N-linked (GlcNAc...) asparagine glycosylation is found at N5 and N67. Residues 85-109 (IGSILTLITLLTIAGNCLVVISVCF) traverse the membrane as a helical segment. The Cytoplasmic segment spans residues 110–119 (VKKLRQPSNY). The helical transmembrane segment at 120-141 (LIVSLALADLSVAVAVIPFVSV) threads the bilayer. At 142 to 153 (TDLIGGKWIFGH) the chain is on the extracellular side. Residues 154–179 (FFCNVFIAMDVMCCTASIMTLCVISI) traverse the membrane as a helical segment. Residues C156 and C232 are joined by a disulfide bond. D163 contacts serotonin. The Cytoplasmic segment spans residues 180–199 (DRYLGITRPLTYPVRQNGKC). The helical transmembrane segment at 200–220 (MPKMILSVWLLSASITLPPLF) threads the bilayer. The Extracellular segment spans residues 221 to 238 (GWAQNVNDDKVCLISQDF). A helical membrane pass occupies residues 239–261 (GYTIYSTAVAFYIPMSVMLFMYY). The Cytoplasmic portion of the chain corresponds to 262–327 (RIYKAARKSA…SIFKREQKAA (66 aa)). The helical transmembrane segment at 328–353 (TTLGIIVGAFTVCWLPFFLLSTARPF) threads the bilayer. The Extracellular segment spans residues 354–364 (ICGTACSCIPL). Residues 365–388 (WVERTCLWLGYANSLINPFIYAFF) traverse the membrane as a helical segment. Topologically, residues 389–446 (NRDLRTTYRSLLQCQYRNINRKLSAAGMHEALKLAERPERPECVLQNSDYCRKKGHDS) are cytoplasmic. The S-palmitoyl cysteine moiety is linked to residue C402.

It belongs to the G-protein coupled receptor 1 family.

The protein resides in the cell membrane. Functionally, G-protein coupled receptor for 5-hydroxytryptamine (serotonin), a biogenic hormone that functions as a neurotransmitter, a hormone and a mitogen. Ligand binding causes a conformation change that triggers signaling via guanine nucleotide-binding proteins (G proteins) and modulates the activity of downstream effectors. HTR7 is coupled to G(s) G alpha proteins and mediates activation of adenylate cyclase activity. This chain is 5-hydroxytryptamine receptor 7 (HTR7), found in Cavia porcellus (Guinea pig).